The following is a 359-amino-acid chain: Agropine synthesis conjugase (359 aa).

The SIS domain maps to 28–171 (TVAKFGRATA…IGGILNEREN (144 aa)).

This Rhizobium rhizogenes (Agrobacterium rhizogenes) protein is Agropine synthesis conjugase (mas2).